Consider the following 70-residue polypeptide: Conotoxin Pl171 (70 aa).

A signal peptide spans 1 to 21; it reads MGMRMMFTMILLVVLVTTVVS. Cystine bridges form between C54-C61 and C55-C67. The residue at position 69 (F69) is a Phenylalanine amide.

Belongs to the conotoxin A superfamily. As to expression, expressed by the venom duct.

It localises to the secreted. Functionally, probable neurotoxin with unknown target. Possibly targets ion channels. In Conus planorbis (Planorbis cone), this protein is Conotoxin Pl171.